A 366-amino-acid chain; its full sequence is MSWNISHPQLSDKLFGKNGVLEEQKSPGFKKRETEVYVGNLPLDISKEEILYLLKDFNPLDVHKIQNGCKCFAFVDLGSMQKVTLAIQELNGKLFHKRKLFVNTSKRPPKRTPDMIQQPRAPLVLEKASGEGFGKTAAIIQLAPKAPVDLCETEKLRAAFFAVPLEMRGSFLVLLLRECFRDLSWLALIHSVRGEAGLLVTSIVPKTPFFWAMHVTEALHQNMQALFSTLAQAEEQQPYLEGSTVMRGTRCLAEYHLGDYGHAWNRCWVLDRVDTWAVVMFIDFGQLATIPVQSLRSLDSDDFWTIPPLTQPFMLEKDILSSYEVVHRILKGKITGALNSAVTAPASNLAVVPPLLPLGCLQQAAA.

The 74-residue stretch at 34 to 107 (TEVYVGNLPL…RKLFVNTSKR (74 aa)) folds into the RRM domain. The region spanning 210–317 (FWAMHVTEAL…PLTQPFMLEK (108 aa)) is the Tudor domain. The stretch at 216–237 (TEALHQNMQALFSTLAQAEEQQ) forms a coiled coil.

This is Tudor domain-containing protein 10 (TDRD10) from Homo sapiens (Human).